The primary structure comprises 154 residues: Style cell-cycle inhibitor 1-A (154 aa).

Basic and acidic residues-rich tracts occupy residues 1–11 (MGSDKKTPEEK) and 24–48 (DEVKSKRQNIKGDEERRKEKKDKSK). Residues 1–84 (MGSDKKTPEE…DKSKNKFEEL (84 aa)) are disordered. A compositionally biased stretch (basic residues) spans 63 to 77 (GEKHKTKSHKHKDKS).

In terms of tissue distribution, specifically expressed in flowers pistils, especially in stigmas and styles. Barely detected in roots, stems, leaves, sepals, petals and stamen.

It is found in the nucleus. In terms of biological role, component of the auxin signaling transduction pathway that regulates cell proliferation and differentiation during flowers stigmas and styles development. Involved in the regulation of auxin-related genes. This chain is Style cell-cycle inhibitor 1-A, found in Nicotiana tabacum (Common tobacco).